The primary structure comprises 797 residues: MAALAYNLGKREINHYFSVRSAKVLALVAVLLLAACHLASRRYRGNDSCEYLLSSGRFLGEKVWQPHSCMMHKYKISEAKTCLVDKHIAFIGDSRIRQLFYSFVKIINPQFKEEGNKHENIPFEDKAASVKVDFLWHPEVNGSMKQCIKVWTEDSVLKPHVIVAGAATWSIKIHNGSEEALAQYKMNITSIAPLLEKLAKTSDVYWVLQDPVYEDLLSENRKMITNEKIDAYNEAAVSILNSSTRTSKSNVKMFSVSKLIAQETIMESLDGLHLPESSRETSAMILMNVYCNKVVKPVDGSCCQPRPPLTLIQKLAACFFTLSIIGYFIFYVIHRNAHRKNKPCTDLESGEEKKNIINTPVSSLEILLQSFCKLGLIMAYFYMCDRANLFMKENKFYTHSSFFIPIIYILVLGVFYNENTKETKVLNREQTDEWKGWMQLVILIYHISGASTFLPVYMHIRVLVAAYLFQTGYGHFSYFWIKGDFGIHRVCQVLFRLNFLVVVLCIVMDRPYQFYYFVPLVTVWFMVIYVTLALWPQITQKKANGNFFWYLGLLLKLGLLLLCIWFLAYSQGAFEKIFSLWPLSKCFELEGSVYEWWFRWRLDRYVVFHGVLFAFIYLALQRRQILSEGKGEPLFSNKISNFLLFVSVVSFLTYSIWASSCKNKAECNELHPSVSVVQIVAFILIRNIPGYARSIYSSFFAWFGKISLELFICQYHIWLAADTRGILVLIPGNPTLNIIVSTFIFVCVAHEISQITTDLAQVVIPKDNPSLFRRLACTIAFFGGVLILSSIQDKSRL.

Topologically, residues 1–18 are cytoplasmic; it reads MAALAYNLGKREINHYFS. The chain crosses the membrane as a helical span at residues 19–39; sequence VRSAKVLALVAVLLLAACHLA. At 40-313 the chain is on the lumenal side; the sequence is SRRYRGNDSC…QPRPPLTLIQ (274 aa). Asn-46 carries N-linked (GlcNAc...) asparagine glycosylation. Ser-94 serves as the catalytic Acyl-ester intermediate. 2 N-linked (GlcNAc...) asparagine glycosylation sites follow: Asn-175 and Asn-187. Active-site residues include Asp-270 and His-273. Residues 314–334 form a helical membrane-spanning segment; it reads KLAACFFTLSIIGYFIFYVIH. The Cytoplasmic segment spans residues 335 to 363; that stretch reads RNAHRKNKPCTDLESGEEKKNIINTPVSS. A helical membrane pass occupies residues 364 to 384; sequence LEILLQSFCKLGLIMAYFYMC. Over 385–395 the chain is Lumenal; the sequence is DRANLFMKENK. The chain crosses the membrane as a helical span at residues 396 to 416; sequence FYTHSSFFIPIIYILVLGVFY. The Cytoplasmic portion of the chain corresponds to 417–439; it reads NENTKETKVLNREQTDEWKGWMQ. Residues 440-460 traverse the membrane as a helical segment; sequence LVILIYHISGASTFLPVYMHI. Position 461 (Arg-461) is a topological domain, lumenal. The chain crosses the membrane as a helical span at residues 462–482; the sequence is VLVAAYLFQTGYGHFSYFWIK. Residues 483-486 lie on the Cytoplasmic side of the membrane; the sequence is GDFG. Residues 487-507 form a helical membrane-spanning segment; sequence IHRVCQVLFRLNFLVVVLCIV. Topologically, residues 508–513 are lumenal; the sequence is MDRPYQ. Residues 514-534 traverse the membrane as a helical segment; the sequence is FYYFVPLVTVWFMVIYVTLAL. Topologically, residues 535–546 are cytoplasmic; that stretch reads WPQITQKKANGN. A helical membrane pass occupies residues 547-567; that stretch reads FFWYLGLLLKLGLLLLCIWFL. Topologically, residues 568-599 are lumenal; it reads AYSQGAFEKIFSLWPLSKCFELEGSVYEWWFR. A helical transmembrane segment spans residues 600 to 620; sequence WRLDRYVVFHGVLFAFIYLAL. Residues 621-638 lie on the Cytoplasmic side of the membrane; it reads QRRQILSEGKGEPLFSNK. The chain crosses the membrane as a helical span at residues 639–659; the sequence is ISNFLLFVSVVSFLTYSIWAS. Over 660–671 the chain is Lumenal; the sequence is SCKNKAECNELH. The helical transmembrane segment at 672–692 threads the bilayer; sequence PSVSVVQIVAFILIRNIPGYA. Residues 693–698 are Cytoplasmic-facing; sequence RSIYSS. The helical transmembrane segment at 699–719 threads the bilayer; it reads FFAWFGKISLELFICQYHIWL. Topologically, residues 720–725 are lumenal; sequence AADTRG. The helical transmembrane segment at 726 to 746 threads the bilayer; that stretch reads ILVLIPGNPTLNIIVSTFIFV. The Cytoplasmic segment spans residues 747–770; sequence CVAHEISQITTDLAQVVIPKDNPS. A helical membrane pass occupies residues 771-791; sequence LFRRLACTIAFFGGVLILSSI. Residues 792–797 lie on the Lumenal side of the membrane; it reads QDKSRL.

Belongs to the PC-esterase family. CASD1 subfamily. N-glycosylated. In terms of tissue distribution, ubiquitously expressed.

It localises to the golgi apparatus membrane. It catalyses the reaction CMP-N-acetyl-beta-neuraminate + acetyl-CoA = CMP-N-acetyl-9-O-acetyl-beta-neuraminate + CoA. The enzyme catalyses a ganglioside GD3 (d18:1(4E)) + acetyl-CoA = a ganglioside Ac-O-7-GD3(d18:1(4E)) + CoA. The catalysed reaction is CMP-N-acetyl-beta-neuraminate + acetyl-CoA = CMP-N-acetyl-7-O-acetyl-beta-neuraminate + CoA. Functionally, key enzyme in the biosynthesis of O-acetylated (O-Ac) sialoglycans such as gangliosides O-AcGD3 and O-AcGD2, which affect various processes such as cell-cell interactions, host-pathogen recognition. Catalyzes the transfer of an acetyl group from a donor, the acetyl-coenzyme-A molecule (acetyl-CoA), to the C7/8/9 OH-position of a sialic acid residue. The primary site of O-acetyl group transfer on sialic acid seems to depend on cell type and can be C7, from which the O-acetyl group could subsequently migrate to the C8 and then to the C9 position, or at C9 with possibility of migrating to the C8 and then to the C7 position. Together with ST8SIA1 (GD3 synthase) it increases the levels of ganglioside Ac-O-7-GD3. Can transfer the acetyl group from acetyl-CoA to free sialate (N-acetylneuraminate, Neu5Ac) in vitro, but has preferred substrate specificity for CMP-activated sialate (CMP-Neu5Ac), resulting in the formation of 9-O-acetylated CMP-Neu5Ac (CMP-Neu5,9Ac2). CMP-Neu5,9Ac2 may be used by sialyltransferases as a sialate donor for glycoconjugate acceptors such as ganglioside GD3. O-acetylation at position C9 of ganglioside GD3 can counteract the pro-apoptotic effects of the ganglioside GD3 in tumor cells. This Mus musculus (Mouse) protein is N-acetylneuraminate (7)9-O-acetyltransferase.